An 85-amino-acid polypeptide reads, in one-letter code: Small ribosomal subunit protein bS18A (85 aa).

This sequence belongs to the bacterial ribosomal protein bS18 family. Part of the 30S ribosomal subunit. Forms a tight heterodimer with protein bS6.

Binds as a heterodimer with protein bS6 to the central domain of the 16S rRNA, where it helps stabilize the platform of the 30S subunit. The protein is Small ribosomal subunit protein bS18A of Mycolicibacterium smegmatis (strain ATCC 700084 / mc(2)155) (Mycobacterium smegmatis).